A 777-amino-acid polypeptide reads, in one-letter code: DnaJ homolog subfamily C member 16 (777 aa).

The signal sequence occupies residues 1 to 23 (MELGRAGPAGLLLLLLLLLAAQA). The Cytoplasmic segment spans residues 24–531 (APERDPYRVL…DSLFHSNWRE (508 aa)). One can recognise a J domain in the interval 28 to 92 (DPYRVLGVGR…EKRANFDRYG (65 aa)). The Thioredoxin domain occupies 117–243 (FDESFFHFPF…LRQFVENLLP (127 aa)). A helical; Anchor for type IV membrane protein membrane pass occupies residues 532–552 (MMPLLSLLFSALFILFGTVIV). Over 553 to 777 (QAFSDSSDTR…FYIPSWPALD (225 aa)) the chain is Extracellular. The interval 558–589 (SSDTRDSPASEKKDTTAKTEKNDTSFNKESNS) is disordered. The segment covering 559-580 (SDTRDSPASEKKDTTAKTEKND) has biased composition (basic and acidic residues). A glycan (N-linked (GlcNAc...) asparagine) is linked at Asn-627.

The protein localises to the endoplasmic reticulum membrane. Plays an important role in regulating the size of autophagosomes during the formation process. The polypeptide is DnaJ homolog subfamily C member 16 (DNAJC16) (Gallus gallus (Chicken)).